The chain runs to 58 residues: Small ribosomal subunit protein bS21 (58 aa).

This sequence belongs to the bacterial ribosomal protein bS21 family.

The sequence is that of Small ribosomal subunit protein bS21 from Latilactobacillus sakei subsp. sakei (strain 23K) (Lactobacillus sakei subsp. sakei).